We begin with the raw amino-acid sequence, 1649 residues long: Cortactin-binding protein 2 (1649 aa).

The tract at residues 1 to 23 (MATDGASCEPDLSRAPEDAAGAA) is disordered. Residues 119–276 (RKMQERMSAQ…EQLKRGSDSK (158 aa)) adopt a coiled-coil conformation. Disordered regions lie at residues 366-440 (IGVS…LHPG) and 454-478 (GNAN…SPTS). 2 stretches are compositionally biased toward low complexity: residues 368–379 (VSVPAFPPSSAS) and 386–396 (PSTGSTPDPTS). The span at 411–422 (QTPGITPQNSQA) shows a compositional bias: polar residues. Arg498 bears the Asymmetric dimethylarginine mark. Residues 499 to 616 (FTGPQAGAPP…SSPQLPPKPS (118 aa)) form a disordered region. Residues 583–593 (TVASPPSSLPQ) show a composition bias toward polar residues. 5 ANK repeats span residues 709-739 (GRPT…DINY), 743-772 (DGHS…QVNA), 776-805 (NGFT…NINH), 809-838 (GGQT…DRSV), and 842-871 (DGWT…PAHG). The segment at 872-897 (NSFSEEESESGVFDLDGGEESPEGKS) is disordered. An ANK 6 repeat occupies 912 to 942 (EGWTAAHIAASKGFKNCLEILCRHGGLETER). The segment at 1444 to 1482 (SCSKKKGESGAWRRVNTSPRRKSSRFSLPTWNKPDLSNE) is disordered. Position 1524 is a phosphoserine (Ser1524). Residues 1616–1649 (PRSKVTQCSQNTKRSSSSSNTRQIEINNNSKEEN) form a disordered region. A compositionally biased stretch (low complexity) spans 1624 to 1638 (SQNTKRSSSSSNTRQ). A compositionally biased stretch (polar residues) spans 1639–1649 (IEINNNSKEEN).

Interacts with CTTN/cortactin SH3 domain. Interacts with STRN, STRN4/zinedin and MOB4/phocein; this interactions mediate the association with the STRIPAK core complex and may regulate dendritic spine distribution of the STRIPAK complex in hippocampal neurons. Activation of glutamate receptors weakens the interaction with STRN and STRN4.

Its subcellular location is the cytoplasm. It is found in the cell cortex. The protein resides in the cell projection. It localises to the dendritic spine. Regulates the dendritic spine distribution of CTTN/cortactin in hippocampal neurons, and thus controls dendritic spinogenesis and dendritic spine maintenance. Associates with the striatin-interacting phosphatase and kinase (STRIPAK) core complex to regulate dendritic spine distribution of the STRIPAK complex in hippocampal neurons. The protein is Cortactin-binding protein 2 (CTTNBP2) of Aotus nancymaae (Ma's night monkey).